The sequence spans 882 residues: Translation initiation factor IF-2 (882 aa).

The segment at 57 to 211 (YIPANKTKDK…KDKSKPKVAT (155 aa)) is disordered. The span at 104–115 (TTSEKQKDKGEQ) shows a compositional bias: basic and acidic residues. Residues 199–211 (RHKKDKSKPKVAT) are compositionally biased toward basic residues. Residues 381–550 (ERPPVVTIMG…LIQAEVLELK (170 aa)) enclose the tr-type G domain. The segment at 390-397 (GHVDHGKT) is G1. 390-397 (GHVDHGKT) provides a ligand contact to GTP. The G2 stretch occupies residues 415–419 (GITQH). Positions 436 to 439 (DTPG) are G3. GTP is bound by residues 436 to 440 (DTPGH) and 490 to 493 (NKMD). Residues 490-493 (NKMD) form a G4 region. The G5 stretch occupies residues 526–528 (SAK).

It belongs to the TRAFAC class translation factor GTPase superfamily. Classic translation factor GTPase family. IF-2 subfamily.

Its subcellular location is the cytoplasm. Its function is as follows. One of the essential components for the initiation of protein synthesis. Protects formylmethionyl-tRNA from spontaneous hydrolysis and promotes its binding to the 30S ribosomal subunits. Also involved in the hydrolysis of GTP during the formation of the 70S ribosomal complex. The sequence is that of Translation initiation factor IF-2 from Helicobacter hepaticus (strain ATCC 51449 / 3B1).